Here is a 274-residue protein sequence, read N- to C-terminus: tRNA pseudouridine synthase A (274 aa).

The active-site Nucleophile is Asp54. Tyr112 is a binding site for substrate.

Belongs to the tRNA pseudouridine synthase TruA family. Homodimer.

It carries out the reaction uridine(38/39/40) in tRNA = pseudouridine(38/39/40) in tRNA. In terms of biological role, formation of pseudouridine at positions 38, 39 and 40 in the anticodon stem and loop of transfer RNAs. This is tRNA pseudouridine synthase A from Solidesulfovibrio magneticus (strain ATCC 700980 / DSM 13731 / RS-1) (Desulfovibrio magneticus).